The primary structure comprises 368 residues: Lipoyl synthase, chloroplastic (368 aa).

Disordered stretches follow at residues 1–30 and 42–61; these read MQSS…RGSV and PTVG…RDPE. 7 residues coordinate [4Fe-4S] cluster: Cys94, Cys99, Cys105, Cys131, Cys135, Cys138, and Ser346. The Radical SAM core domain maps to 114 to 335; that stretch reads GEGDGIATAT…KEYGESVGFR (222 aa).

It belongs to the radical SAM superfamily. Lipoyl synthase family. [4Fe-4S] cluster serves as cofactor.

The protein localises to the plastid. The protein resides in the chloroplast. The enzyme catalyses [[Fe-S] cluster scaffold protein carrying a second [4Fe-4S](2+) cluster] + N(6)-octanoyl-L-lysyl-[protein] + 2 oxidized [2Fe-2S]-[ferredoxin] + 2 S-adenosyl-L-methionine + 4 H(+) = [[Fe-S] cluster scaffold protein] + N(6)-[(R)-dihydrolipoyl]-L-lysyl-[protein] + 4 Fe(3+) + 2 hydrogen sulfide + 2 5'-deoxyadenosine + 2 L-methionine + 2 reduced [2Fe-2S]-[ferredoxin]. It functions in the pathway protein modification; protein lipoylation via endogenous pathway; protein N(6)-(lipoyl)lysine from octanoyl-[acyl-carrier-protein]: step 2/2. In terms of biological role, catalyzes the radical-mediated insertion of two sulfur atoms into the C-6 and C-8 positions of the octanoyl moiety bound to the lipoyl domains of lipoate-dependent enzymes, thereby converting the octanoylated domains into lipoylated derivatives. The sequence is that of Lipoyl synthase, chloroplastic from Sorghum bicolor (Sorghum).